The primary structure comprises 843 residues: Protein translocase subunit SecA 1 (843 aa).

Residues Q91, 109–113 (GEGKT), and D498 each bind ATP. Over residues 799–813 (EAKHVSAEDGKEKVK) the composition is skewed to basic and acidic residues. Residues 799–826 (EAKHVSAEDGKEKVKPKPIVKGDQVGRN) form a disordered region. Residues C829, C831, C840, and H841 each contribute to the Zn(2+) site.

The protein belongs to the SecA family. In terms of assembly, monomer and homodimer. Part of the essential Sec protein translocation apparatus which comprises SecA, SecYEG and auxiliary proteins SecDF. Other proteins may also be involved. Requires Zn(2+) as cofactor.

It is found in the cell membrane. It localises to the cytoplasm. The catalysed reaction is ATP + H2O + cellular proteinSide 1 = ADP + phosphate + cellular proteinSide 2.. Functionally, part of the Sec protein translocase complex. Interacts with the SecYEG preprotein conducting channel. Has a central role in coupling the hydrolysis of ATP to the transfer of proteins into and across the cell membrane, serving as an ATP-driven molecular motor driving the stepwise translocation of polypeptide chains across the membrane. The polypeptide is Protein translocase subunit SecA 1 (Staphylococcus aureus (strain MRSA252)).